The chain runs to 393 residues: Venom metalloproteinase BumaMPs1 (393 aa).

Positions 1-15 are cleaved as a signal peptide; sequence MFVHLLVLLFAAVEA. The N-linked (GlcNAc...) asparagine glycan is linked to Asn158. A Peptidase M12B domain is found at 167-377; sequence KCVKIEYVFV…RVEELITRRK (211 aa). Zn(2+) is bound at residue His323. The active site involves Glu324. His327 and His333 together coordinate Zn(2+). The interval 378 to 393 is disintegrin-like domain; it reads INHCIVETCDGKRKRN.

This sequence belongs to the venom metalloproteinase (M12B) family. The cofactor is Zn(2+). In terms of processing, contains several disulfide bonds. Expressed by the venom gland.

It localises to the secreted. Metalloprotease. This Olivierus martensii (Manchurian scorpion) protein is Venom metalloproteinase BumaMPs1.